The following is a 479-amino-acid chain: Glutamyl-tRNA(Gln) amidotransferase subunit A (479 aa).

Residues K71 and S146 each act as charge relay system in the active site. S170 (acyl-ester intermediate) is an active-site residue.

It belongs to the amidase family. GatA subfamily. As to quaternary structure, heterotrimer of A, B and C subunits.

The enzyme catalyses L-glutamyl-tRNA(Gln) + L-glutamine + ATP + H2O = L-glutaminyl-tRNA(Gln) + L-glutamate + ADP + phosphate + H(+). Allows the formation of correctly charged Gln-tRNA(Gln) through the transamidation of misacylated Glu-tRNA(Gln) in organisms which lack glutaminyl-tRNA synthetase. The reaction takes place in the presence of glutamine and ATP through an activated gamma-phospho-Glu-tRNA(Gln). The polypeptide is Glutamyl-tRNA(Gln) amidotransferase subunit A (Lactobacillus gasseri (strain ATCC 33323 / DSM 20243 / BCRC 14619 / CIP 102991 / JCM 1131 / KCTC 3163 / NCIMB 11718 / NCTC 13722 / AM63)).